A 714-amino-acid polypeptide reads, in one-letter code: Neutral ceramidase A (714 aa).

Residues 1-23 (MKRSIVFIYSLVILLLSVGFIDA) form the signal peptide. N218 and N246 each carry an N-linked (GlcNAc...) asparagine glycan. S293 serves as the catalytic Nucleophile. 6 N-linked (GlcNAc...) asparagine glycosylation sites follow: N353, N373, N416, N571, N610, and N700.

This sequence belongs to the neutral ceramidase family.

It localises to the secreted. The catalysed reaction is an N-acylsphing-4-enine + H2O = sphing-4-enine + a fatty acid. Its function is as follows. Hydrolyzes the sphingolipid ceramide into sphingosine and free fatty acid at an optimal pH of 3.0. Has no activity toward glycosphingolipids, such as GalCer and Galbeta1-3GalNAcbeta1-4(NeuAcalpha2-3)Galbeta1-4Glcbeta1-1'Cer or sphingomyelin. This Dictyostelium discoideum (Social amoeba) protein is Neutral ceramidase A (dcd2A).